Here is a 342-residue protein sequence, read N- to C-terminus: S-methyl-5'-thioadenosine phosphorylase (342 aa).

Residues T51, 99 to 100, and 132 to 133 each bind phosphate; these read RH and SA. Residue M234 participates in substrate binding. S235 serves as a coordination point for phosphate. 258 to 260 lines the substrate pocket; it reads DYD.

This sequence belongs to the PNP/MTAP phosphorylase family. MTAP subfamily. Homotrimer.

The protein resides in the cytoplasm. It localises to the nucleus. The catalysed reaction is S-methyl-5'-thioadenosine + phosphate = 5-(methylsulfanyl)-alpha-D-ribose 1-phosphate + adenine. It participates in amino-acid biosynthesis; L-methionine biosynthesis via salvage pathway; S-methyl-5-thio-alpha-D-ribose 1-phosphate from S-methyl-5'-thioadenosine (phosphorylase route): step 1/1. Catalyzes the reversible phosphorylation of S-methyl-5'-thioadenosine (MTA) to adenine and 5-methylthioribose-1-phosphate. Involved in the breakdown of MTA, a major by-product of polyamine biosynthesis. Responsible for the first step in the methionine salvage pathway after MTA has been generated from S-adenosylmethionine. Has broad substrate specificity with 6-aminopurine nucleosides as preferred substrates. The polypeptide is S-methyl-5'-thioadenosine phosphorylase (Aspergillus fumigatus (strain ATCC MYA-4609 / CBS 101355 / FGSC A1100 / Af293) (Neosartorya fumigata)).